The following is a 241-amino-acid chain: Aquaporin Z 1 (241 aa).

Residues 23–43 (AVFAAAFPELGIGFLGVAFAF) traverse the membrane as a helical segment. Positions 63 to 65 (NPA) match the NPA 1 motif. Helical transmembrane passes span 85 to 105 (IVAQ…ILTG), 129 to 149 (LLSA…VILG), and 156 to 176 (PVGF…LISI). An NPA 2 motif is present at residues 184–186 (NPA). A helical membrane pass occupies residues 204–224 (WLFWLAPILGGAIGAVVWKIF).

The protein belongs to the MIP/aquaporin (TC 1.A.8) family. In terms of assembly, homotetramer.

Its subcellular location is the cell inner membrane. The catalysed reaction is H2O(in) = H2O(out). Functionally, channel that permits osmotically driven movement of water in both directions. It is involved in the osmoregulation and in the maintenance of cell turgor during volume expansion in rapidly growing cells. It mediates rapid entry or exit of water in response to abrupt changes in osmolarity. The protein is Aquaporin Z 1 of Agrobacterium fabrum (strain C58 / ATCC 33970) (Agrobacterium tumefaciens (strain C58)).